The sequence spans 680 residues: Dihydroxyacetone phosphate acyltransferase (680 aa).

Residues S12 and S17 each carry the phosphoserine modification. The HXXXXD motif signature appears at H162–D167. K643 carries the post-translational modification N6-acetyllysine. A Microbody targeting signal motif is present at residues A678 to L680.

This sequence belongs to the GPAT/DAPAT family. Part of a heterotrimeric complex composed of GNPAT, AGPS and a modified form of GNPAT.

It localises to the peroxisome membrane. The catalysed reaction is dihydroxyacetone phosphate + an acyl-CoA = a 1-acylglycerone 3-phosphate + CoA. It carries out the reaction dihydroxyacetone phosphate + hexadecanoyl-CoA = 1-hexadecanoylglycerone 3-phosphate + CoA. It participates in membrane lipid metabolism; glycerophospholipid metabolism. Its function is as follows. Dihydroxyacetonephosphate acyltransferase catalyzing the first step in the biosynthesis of plasmalogens, a subset of phospholipids that differ from other glycerolipids by having an alkyl chain attached through a vinyl ether linkage at the sn-1 position of the glycerol backbone, and which unique physical properties have an impact on various aspects of cell signaling and membrane biology. This is Dihydroxyacetone phosphate acyltransferase from Bos taurus (Bovine).